We begin with the raw amino-acid sequence, 258 residues long: Phosphoadenosine 5'-phosphosulfate reductase (258 aa).

Cys-244 (nucleophile; cysteine thiosulfonate intermediate) is an active-site residue.

The protein belongs to the PAPS reductase family. CysH subfamily.

Its subcellular location is the cytoplasm. It carries out the reaction [thioredoxin]-disulfide + sulfite + adenosine 3',5'-bisphosphate + 2 H(+) = [thioredoxin]-dithiol + 3'-phosphoadenylyl sulfate. The protein operates within sulfur metabolism; hydrogen sulfide biosynthesis; sulfite from sulfate: step 3/3. Catalyzes the formation of sulfite from phosphoadenosine 5'-phosphosulfate (PAPS) using thioredoxin as an electron donor. In Vibrio vulnificus (strain YJ016), this protein is Phosphoadenosine 5'-phosphosulfate reductase.